The following is a 79-amino-acid chain: Sulfur carrier protein TusA (79 aa).

Cysteine 17 functions as the Cysteine persulfide intermediate in the catalytic mechanism.

Belongs to the sulfur carrier protein TusA family.

It localises to the cytoplasm. Functionally, sulfur carrier protein which probably makes part of a sulfur-relay system. The protein is Sulfur carrier protein TusA of Idiomarina loihiensis (strain ATCC BAA-735 / DSM 15497 / L2-TR).